Consider the following 327-residue polypeptide: UDP-glucose 4-epimerase (327 aa).

Thr119 serves as a coordination point for substrate. Catalysis depends on Tyr143, which acts as the Proton acceptor.

This sequence belongs to the NAD(P)-dependent epimerase/dehydratase family. Requires NAD(+) as cofactor.

The catalysed reaction is UDP-alpha-D-glucose = UDP-alpha-D-galactose. Its pathway is carbohydrate metabolism; galactose metabolism. It functions in the pathway glycan metabolism; exopolysaccharide biosynthesis. The protein is UDP-glucose 4-epimerase (exoB) of Rhizobium leguminosarum bv. trifolii.